The sequence spans 278 residues: Protein U52 (278 aa).

A compositionally biased stretch (polar residues) spans 1-18 (MTRVSSVSASCTTTNPPK). Residues 1 to 25 (MTRVSSVSASCTTTNPPKNTREDMS) are disordered.

Belongs to the herpesviridae UL79 family.

This Elephas maximus (Indian elephant) protein is Protein U52.